Here is a 162-residue protein sequence, read N- to C-terminus: Proepiregulin (162 aa).

The signal sequence occupies residues 1–22; the sequence is METLPASWVLTLLCLGSHLLQA. A propeptide spanning residues 23–55 is cleaved from the precursor; it reads VISTTVIPSCIPGESEDNCTALVQMEDDPRVAQ. A glycan (N-linked (GlcNAc...) asparagine) is linked at Asn40. Residues 53 to 112 are Extracellular-facing; the sequence is VAQVQITKCSSDMDGYCLHGQCIYLVDMREKFCRCEVGYTGLRCEHFFLTVHQPLSKEYV. The 41-residue stretch at 57–97 folds into the EGF-like domain; it reads QITKCSSDMDGYCLHGQCIYLVDMREKFCRCEVGYTGLRCE. 3 disulfides stabilise this stretch: Cys61/Cys74, Cys69/Cys85, and Cys87/Cys96. Positions 102 to 162 are cleaved as a propeptide — removed in mature form; that stretch reads TVHQPLSKEY…TSGDPVLPQV (61 aa). Residues 113-133 form a helical membrane-spanning segment; that stretch reads ALTVILIFLFLIITAGCIYYF. Topologically, residues 134–162 are cytoplasmic; it reads CRWYKNRKSKKSREEYERVTSGDPVLPQV.

In terms of assembly, interacts with EGFR and ERBB4.

It is found in the secreted. Its subcellular location is the extracellular space. The protein localises to the cell membrane. Ligand of the EGF receptor/EGFR and ERBB4. Stimulates EGFR and ERBB4 tyrosine phosphorylation. Contributes to inflammation, wound healing, tissue repair, and oocyte maturation by regulating angiogenesis and vascular remodeling and by stimulating cell proliferation. This Mus musculus (Mouse) protein is Proepiregulin (Ereg).